The chain runs to 94 residues: CRISPR-associated endoribonuclease Cas2 (94 aa).

This sequence belongs to the CRISPR-associated endoribonuclease Cas2 protein family. E.coli-subtype subfamily. As to quaternary structure, homodimer. Part of the Cas1-Cas2 complex. Forms a hexamer with 2 Cas1 dimers sandwiching a Cas2 dimer. The DNA lies across a flat surface extending from 1 Cas1 dimer, across the Cas2 dimer and contacting the other Cas1 dimer. Only 1 Cas1 protein from each dimer is catalytic, the other interacts with the Cas2 dimer and possibly target DNA.

In terms of biological role, CRISPR (clustered regularly interspaced short palindromic repeat), is an adaptive immune system that provides protection against mobile genetic elements (viruses, transposable elements and conjugative plasmids). CRISPR clusters contain sequences complementary to antecedent mobile elements and target invading nucleic acids. CRISPR clusters are transcribed and processed into CRISPR RNA (crRNA). The Cas1-Cas2 complex is involved in CRISPR adaptation, the first stage of CRISPR immunity, being required for the addition/removal of CRISPR spacers at the leader end of the CRISPR locus. The Cas1-Cas2 complex introduces staggered nicks into both strands of the CRISPR array near the leader repeat and joins the 5'-ends of the repeat strands with the 3'-ends of the new spacer sequence. Spacer DNA integration requires supercoiled target DNA and 3'-OH ends on the inserted (spacer) DNA and probably initiates with a nucleophilic attack of the C 3'-OH end of the protospacer on the minus strand of the first repeat sequence. Expression of Cas1-Cas2 in a strain lacking both genes permits spacer acquisition. Cas2 not seen to bind DNA alone; the Cas1-Cas2 complex preferentially binds CRISPR-locus DNA. Highest binding is seen to a dual forked DNA complex with 3'-overhangs and a protospacer-adjacent motif-complement specifically positioned. The protospacer DNA lies across a flat surface extending from 1 Cas1 dimer, across the Cas2 dimer and contacting the other Cas1 dimer; the 23 bp-long ds section of the DNA is bracketed by 1 Tyr-22 from each of the Cas1 dimers. Cas1 cuts within the 3'-overhang, to generate a 33-nucleotide DNA that is probably incorporated into the CRISPR leader by a cut-and-paste mechanism. This subunit's probable nuclease activity is not required for spacer acquisition. The protein is CRISPR-associated endoribonuclease Cas2 (ygbF) of Escherichia coli (strain K12).